The sequence spans 136 residues: Protein PsiE (136 aa).

The next 4 membrane-spanning stretches (helical) occupy residues isoleucine 15–leucine 35, tyrosine 55–valine 75, phenylalanine 82–isoleucine 102, and proline 108–cysteine 128.

The protein belongs to the PsiE family.

It localises to the cell inner membrane. This is Protein PsiE from Escherichia coli O17:K52:H18 (strain UMN026 / ExPEC).